A 409-amino-acid chain; its full sequence is tRNA(Met) cytidine acetate ligase (409 aa).

Residues 7-20, glycine 102, asparagine 169, and arginine 194 each bind ATP; that span reads VVEY…HLHH.

The protein belongs to the TmcAL family.

The protein localises to the cytoplasm. It carries out the reaction cytidine(34) in elongator tRNA(Met) + acetate + ATP = N(4)-acetylcytidine(34) in elongator tRNA(Met) + AMP + diphosphate. Catalyzes the formation of N(4)-acetylcytidine (ac(4)C) at the wobble position of elongator tRNA(Met), using acetate and ATP as substrates. First activates an acetate ion to form acetyladenylate (Ac-AMP) and then transfers the acetyl group to tRNA to form ac(4)C34. This chain is tRNA(Met) cytidine acetate ligase, found in Clostridium botulinum (strain Loch Maree / Type A3).